A 197-amino-acid chain; its full sequence is Probable chorismate pyruvate-lyase 2 (197 aa).

Basic and acidic residues predominate over residues 1-14 (MRFDAADAHWRETP). Positions 1-23 (MRFDAADAHWRETPRPGASSAQK) are disordered. Positions 73, 111, and 173 each coordinate substrate.

It belongs to the UbiC family.

The protein localises to the cytoplasm. The catalysed reaction is chorismate = 4-hydroxybenzoate + pyruvate. The protein operates within cofactor biosynthesis; ubiquinone biosynthesis. Its function is as follows. Removes the pyruvyl group from chorismate, with concomitant aromatization of the ring, to provide 4-hydroxybenzoate (4HB) for the ubiquinone pathway. This is Probable chorismate pyruvate-lyase 2 from Burkholderia pseudomallei (strain 1710b).